The sequence spans 126 residues: UPF0102 protein TP_0913 (126 aa).

This sequence belongs to the UPF0102 family.

This is UPF0102 protein TP_0913 from Treponema pallidum (strain Nichols).